The sequence spans 324 residues: Protoheme IX farnesyltransferase 2 (324 aa).

Transmembrane regions (helical) follow at residues L39–A59, I63–A83, H115–T135, L137–V157, I166–G186, A192–M212, I239–W259, L260–H280, and L302–W322.

This sequence belongs to the UbiA prenyltransferase family. Protoheme IX farnesyltransferase subfamily.

It is found in the cell membrane. The enzyme catalyses heme b + (2E,6E)-farnesyl diphosphate + H2O = Fe(II)-heme o + diphosphate. Its pathway is porphyrin-containing compound metabolism; heme O biosynthesis; heme O from protoheme: step 1/1. In terms of biological role, converts heme B (protoheme IX) to heme O by substitution of the vinyl group on carbon 2 of heme B porphyrin ring with a hydroxyethyl farnesyl side group. This chain is Protoheme IX farnesyltransferase 2, found in Saccharopolyspora erythraea (strain ATCC 11635 / DSM 40517 / JCM 4748 / NBRC 13426 / NCIMB 8594 / NRRL 2338).